The chain runs to 156 residues: SsrA-binding protein (156 aa).

Belongs to the SmpB family.

It is found in the cytoplasm. Required for rescue of stalled ribosomes mediated by trans-translation. Binds to transfer-messenger RNA (tmRNA), required for stable association of tmRNA with ribosomes. tmRNA and SmpB together mimic tRNA shape, replacing the anticodon stem-loop with SmpB. tmRNA is encoded by the ssrA gene; the 2 termini fold to resemble tRNA(Ala) and it encodes a 'tag peptide', a short internal open reading frame. During trans-translation Ala-aminoacylated tmRNA acts like a tRNA, entering the A-site of stalled ribosomes, displacing the stalled mRNA. The ribosome then switches to translate the ORF on the tmRNA; the nascent peptide is terminated with the 'tag peptide' encoded by the tmRNA and targeted for degradation. The ribosome is freed to recommence translation, which seems to be the essential function of trans-translation. The sequence is that of SsrA-binding protein from Bacillus pumilus (strain SAFR-032).